A 160-amino-acid polypeptide reads, in one-letter code: 2-C-methyl-D-erythritol 2,4-cyclodiphosphate synthase (160 aa).

The a divalent metal cation site is built by aspartate 11 and histidine 13. 4-CDP-2-C-methyl-D-erythritol 2-phosphate is bound by residues 11–13 (DVH) and 37–38 (HS). An a divalent metal cation-binding site is contributed by histidine 45. Residues 59-61 (DIG), 64-68 (FPDTD), 135-138 (TTTE), phenylalanine 142, and arginine 145 each bind 4-CDP-2-C-methyl-D-erythritol 2-phosphate.

This sequence belongs to the IspF family. As to quaternary structure, homotrimer. Requires a divalent metal cation as cofactor.

The enzyme catalyses 4-CDP-2-C-methyl-D-erythritol 2-phosphate = 2-C-methyl-D-erythritol 2,4-cyclic diphosphate + CMP. It participates in isoprenoid biosynthesis; isopentenyl diphosphate biosynthesis via DXP pathway; isopentenyl diphosphate from 1-deoxy-D-xylulose 5-phosphate: step 4/6. Involved in the biosynthesis of isopentenyl diphosphate (IPP) and dimethylallyl diphosphate (DMAPP), two major building blocks of isoprenoid compounds. Catalyzes the conversion of 4-diphosphocytidyl-2-C-methyl-D-erythritol 2-phosphate (CDP-ME2P) to 2-C-methyl-D-erythritol 2,4-cyclodiphosphate (ME-CPP) with a corresponding release of cytidine 5-monophosphate (CMP). The chain is 2-C-methyl-D-erythritol 2,4-cyclodiphosphate synthase from Alcanivorax borkumensis (strain ATCC 700651 / DSM 11573 / NCIMB 13689 / SK2).